A 75-amino-acid polypeptide reads, in one-letter code: Exodeoxyribonuclease 7 small subunit (75 aa).

This sequence belongs to the XseB family. As to quaternary structure, heterooligomer composed of large and small subunits.

The protein resides in the cytoplasm. It catalyses the reaction Exonucleolytic cleavage in either 5'- to 3'- or 3'- to 5'-direction to yield nucleoside 5'-phosphates.. Bidirectionally degrades single-stranded DNA into large acid-insoluble oligonucleotides, which are then degraded further into small acid-soluble oligonucleotides. This chain is Exodeoxyribonuclease 7 small subunit, found in Elusimicrobium minutum (strain Pei191).